The chain runs to 370 residues: Putative agmatine deiminase (370 aa).

Cys-361 acts as the Amidino-cysteine intermediate in catalysis.

Belongs to the agmatine deiminase family.

It carries out the reaction agmatine + H2O = N-carbamoylputrescine + NH4(+). This is Putative agmatine deiminase from Shewanella putrefaciens (strain CN-32 / ATCC BAA-453).